The chain runs to 336 residues: D-erythrose-4-phosphate dehydrogenase (336 aa).

11–12 contributes to the NAD(+) binding site; it reads RI. Substrate-binding positions include 153–155, R199, 212–213, and R235; these read SCT and TR. Residue C154 is the Nucleophile of the active site. Residue N317 participates in NAD(+) binding.

Belongs to the glyceraldehyde-3-phosphate dehydrogenase family. Epd subfamily. In terms of assembly, homotetramer.

It localises to the cytoplasm. It carries out the reaction D-erythrose 4-phosphate + NAD(+) + H2O = 4-phospho-D-erythronate + NADH + 2 H(+). The protein operates within cofactor biosynthesis; pyridoxine 5'-phosphate biosynthesis; pyridoxine 5'-phosphate from D-erythrose 4-phosphate: step 1/5. In terms of biological role, catalyzes the NAD-dependent conversion of D-erythrose 4-phosphate to 4-phosphoerythronate. The chain is D-erythrose-4-phosphate dehydrogenase from Alteromonas mediterranea (strain DSM 17117 / CIP 110805 / LMG 28347 / Deep ecotype).